The chain runs to 396 residues: Elongation factor Tu (396 aa).

One can recognise a tr-type G domain in the interval 10–205 (KPHVNIGTIG…AVDESIPDPV (196 aa)). Residues 19 to 26 (GHVDHGKT) are G1. Residue 19–26 (GHVDHGKT) coordinates GTP. Residue threonine 26 coordinates Mg(2+). Residues 62–66 (GITIN) form a G2 region. Residues 83–86 (DAPG) form a G3 region. GTP-binding positions include 83-87 (DAPGH) and 138-141 (NKAD). Positions 138–141 (NKAD) are G4. Residues 175-177 (SAL) form a G5 region.

The protein belongs to the TRAFAC class translation factor GTPase superfamily. Classic translation factor GTPase family. EF-Tu/EF-1A subfamily. As to quaternary structure, monomer.

Its subcellular location is the cytoplasm. The enzyme catalyses GTP + H2O = GDP + phosphate + H(+). Its function is as follows. GTP hydrolase that promotes the GTP-dependent binding of aminoacyl-tRNA to the A-site of ribosomes during protein biosynthesis. In Mycobacterium bovis (strain ATCC BAA-935 / AF2122/97), this protein is Elongation factor Tu.